Reading from the N-terminus, the 397-residue chain is Enoyl-[acyl-carrier-protein] reductase [NADH] (397 aa).

NAD(+) contacts are provided by residues 48–53 (GASTGY), 74–75 (FE), 111–112 (DA), and 139–140 (VA). Residue Tyr-225 coordinates substrate. The active-site Proton donor is Tyr-235. Residues Lys-244 and 273 to 275 (VVT) each bind NAD(+).

Belongs to the TER reductase family. As to quaternary structure, monomer.

It carries out the reaction a 2,3-saturated acyl-[ACP] + NAD(+) = a (2E)-enoyl-[ACP] + NADH + H(+). Its pathway is lipid metabolism; fatty acid biosynthesis. In terms of biological role, involved in the final reduction of the elongation cycle of fatty acid synthesis (FAS II). Catalyzes the reduction of a carbon-carbon double bond in an enoyl moiety that is covalently linked to an acyl carrier protein (ACP). The protein is Enoyl-[acyl-carrier-protein] reductase [NADH] of Burkholderia pseudomallei (strain K96243).